The sequence spans 103 residues: uncharacterized protein (103 aa).

The chain crosses the membrane as a helical span at residues 35-57; it reads PFVSMFQTFLEVLTATVLAFTAY.

It is found in the host membrane. This is an uncharacterized protein from Acidianus bottle-shaped virus (isolate Italy/Pozzuoli) (ABV).